The following is a 104-amino-acid chain: Pyrimidine/purine nucleoside phosphorylase (104 aa).

It belongs to the nucleoside phosphorylase PpnP family.

The catalysed reaction is a purine D-ribonucleoside + phosphate = a purine nucleobase + alpha-D-ribose 1-phosphate. The enzyme catalyses adenosine + phosphate = alpha-D-ribose 1-phosphate + adenine. It carries out the reaction cytidine + phosphate = cytosine + alpha-D-ribose 1-phosphate. It catalyses the reaction guanosine + phosphate = alpha-D-ribose 1-phosphate + guanine. The catalysed reaction is inosine + phosphate = alpha-D-ribose 1-phosphate + hypoxanthine. The enzyme catalyses thymidine + phosphate = 2-deoxy-alpha-D-ribose 1-phosphate + thymine. It carries out the reaction uridine + phosphate = alpha-D-ribose 1-phosphate + uracil. It catalyses the reaction xanthosine + phosphate = alpha-D-ribose 1-phosphate + xanthine. Catalyzes the phosphorolysis of diverse nucleosides, yielding D-ribose 1-phosphate and the respective free bases. Can use uridine, adenosine, guanosine, cytidine, thymidine, inosine and xanthosine as substrates. Also catalyzes the reverse reactions. The polypeptide is Pyrimidine/purine nucleoside phosphorylase (Geobacter sulfurreducens (strain ATCC 51573 / DSM 12127 / PCA)).